The primary structure comprises 237 residues: Transcriptional regulatory protein YvrH (237 aa).

Residues 5-119 (SILIVDDEKA…ELAARIRAHL (115 aa)) enclose the Response regulatory domain. 4-aspartylphosphate is present on Asp55. The segment at residues 131–230 (NQTYTYDYFT…VRGLGYRFIP (100 aa)) is a DNA-binding region (ompR/PhoB-type).

In terms of processing, phosphorylated by YvrG.

It localises to the cytoplasm. Its function is as follows. Member of the two-component regulatory system YvrG/YvrH that positively regulates 7 transcriptional units (wprA, wapA-yxxG, dltABCDE, sunA, sunT-bdbA-yolJ-bdbB, sigO-rsoA, and sigX-rsiX), and negatively regulates the lytABC operon. The protein is Transcriptional regulatory protein YvrH (yvrH) of Bacillus subtilis (strain 168).